Reading from the N-terminus, the 354-residue chain is Hyaluronan and proteoglycan link protein 1 (354 aa).

The propeptide occupies 1–15 (MKSLLLLVLISICWA). N21 and N56 each carry an N-linked (GlcNAc...) asparagine glycan. An Ig-like V-type domain is found at 38-152 (PHLLVEAEQA…EGLEDDTVVV (115 aa)). Cystine bridges form between C61–C139, C181–C252, C205–C226, C279–C349, and C304–C325. Link domains lie at 159–254 (VVFP…FCFT) and 259–351 (GRFY…YCFR).

This sequence belongs to the HAPLN family. As to expression, widely expressed. Weakly expressed in the brain.

The protein resides in the secreted. It is found in the extracellular space. The protein localises to the extracellular matrix. Functionally, stabilizes the aggregates of proteoglycan monomers with hyaluronic acid in the extracellular cartilage matrix. The chain is Hyaluronan and proteoglycan link protein 1 (HAPLN1) from Homo sapiens (Human).